A 498-amino-acid chain; its full sequence is ATP synthase subunit beta, chloroplastic (498 aa).

An ATP-binding site is contributed by 172-179; it reads GGAGVGKT.

The protein belongs to the ATPase alpha/beta chains family. As to quaternary structure, F-type ATPases have 2 components, CF(1) - the catalytic core - and CF(0) - the membrane proton channel. CF(1) has five subunits: alpha(3), beta(3), gamma(1), delta(1), epsilon(1). CF(0) has four main subunits: a(1), b(1), b'(1) and c(9-12).

The protein localises to the plastid. The protein resides in the chloroplast thylakoid membrane. It catalyses the reaction ATP + H2O + 4 H(+)(in) = ADP + phosphate + 5 H(+)(out). Produces ATP from ADP in the presence of a proton gradient across the membrane. The catalytic sites are hosted primarily by the beta subunits. In Nicotiana tabacum (Common tobacco), this protein is ATP synthase subunit beta, chloroplastic.